The primary structure comprises 922 residues: Hexokinase-3 (922 aa).

Positions 1–23 (MATIGPSGLHPGERASVCPHEGV) are disordered. 2 consecutive Hexokinase domains span residues 25–469 (RPSG…MVTA) and 475–911 (AAHR…LVTA). A hexokinase small subdomain 1 region spans residues 82 to 218 (HGTEQGDFLV…TYRIDVVAMV (137 aa)). 93–100 (ELGATGAS) lines the ATP pocket. Residue 93 to 102 (ELGATGASLR) participates in D-glucose 6-phosphate binding. D-glucose-binding positions include Ser166, 183 to 184 (TK), and 219 to 220 (ND). Residues 219–458 (NDTVGTMMGC…CDVSFIPSVD (240 aa)) form a hexokinase large subdomain 1 region. D-glucose 6-phosphate is bound by residues Asp220 and Thr243. D-glucose is bound by residues Asn246, Glu271, and 302–305 (QRFE). Residue 424-426 (GGR) coordinates D-glucose 6-phosphate. ATP-binding positions include 436 to 437 (RI) and 540 to 545 (DLGGTN). The interval 529-660 (DGSERGDFLA…AVELNVVAIV (132 aa)) is hexokinase small subdomain 2. 540–544 (DLGGT) provides a ligand contact to D-glucose 6-phosphate. Residues 608–609 (SF), 625–626 (TK), and 661–662 (ND) each bind D-glucose. The tract at residues 661–900 (NDTVGTMMSC…CTVTFLQSED (240 aa)) is hexokinase large subdomain 2. D-glucose 6-phosphate contacts are provided by Asp662 and Thr685. Residue Thr685 coordinates ATP. Residues 687 to 688 (TN), Glu713, and Glu747 each bind D-glucose. ATP is bound by residues 752–753 (GM), 789–793 (TKFLS), and 868–872 (TLYKL). D-glucose 6-phosphate contacts are provided by residues 866–868 (DGT) and Ser902.

Belongs to the hexokinase family.

The enzyme catalyses a D-hexose + ATP = a D-hexose 6-phosphate + ADP + H(+). The catalysed reaction is D-fructose + ATP = D-fructose 6-phosphate + ADP + H(+). It catalyses the reaction D-glucose + ATP = D-glucose 6-phosphate + ADP + H(+). It participates in carbohydrate metabolism; hexose metabolism. It functions in the pathway carbohydrate degradation; glycolysis; D-glyceraldehyde 3-phosphate and glycerone phosphate from D-glucose: step 1/4. Hexokinase is an allosteric enzyme inhibited by its product D-glucose 6-phosphate. Catalyzes the phosphorylation of hexose, such as D-glucose and D-fructose, to hexose 6-phosphate (D-glucose 6-phosphate and D-fructose 6-phosphate, respectively). Mediates the initial step of glycolysis by catalyzing phosphorylation of D-glucose to D-glucose 6-phosphate. The protein is Hexokinase-3 of Mus musculus (Mouse).